A 212-amino-acid chain; its full sequence is Small ribosomal subunit protein uS5 (212 aa).

One can recognise an S5 DRBM domain in the interval 48–111 (LDDEVLDINM…EVAKLNIIDV (64 aa)).

Belongs to the universal ribosomal protein uS5 family. Part of the 30S ribosomal subunit. Contacts protein S4.

Its function is as follows. With S4 and S12 plays an important role in translational accuracy. This is Small ribosomal subunit protein uS5 from Halobacterium salinarum (strain ATCC 700922 / JCM 11081 / NRC-1) (Halobacterium halobium).